We begin with the raw amino-acid sequence, 269 residues long: Major capsid protein P2 (269 aa).

Homotrimer.

It is found in the virion. Major capsid protein. This chain is Major capsid protein P2 (II), found in Pseudoalteromonas phage PM2 (Bacteriophage PM2).